The sequence spans 454 residues: UPF0210 protein Memar_2269 (454 aa).

Belongs to the UPF0210 family.

In Methanoculleus marisnigri (strain ATCC 35101 / DSM 1498 / JR1), this protein is UPF0210 protein Memar_2269.